The primary structure comprises 1396 residues: uncharacterized protein (1396 aa).

Residue 88-95 (AYKKWGRS) participates in ATP binding. Disordered regions lie at residues 146 to 165 (EKIHKKLEGSPSPEEELSPT) and 198 to 388 (KPCS…VKDL). Residues 198–221 (KPCSYSSSSSSSTVPPASTDTSSP) show a composition bias toward low complexity. Over residues 242 to 268 (MHEKAQSRSRHEKESKLSSSTIEEKPA) the composition is skewed to basic and acidic residues. A compositionally biased stretch (low complexity) spans 286 to 300 (SWSSGSSEAGSSSSG). Over residues 312 to 327 (VKVRHKAREIRNRKGR) the composition is skewed to basic residues. Ser-817 and Ser-1083 each carry phosphoserine. The tract at residues 1113–1137 (PISASELSPGGGSESEFESEKDEAS) is disordered. Phosphoserine is present on residues Ser-1197 and Ser-1339. Residues 1347–1396 (TGERGSETKPNGLHRKMCSSASSDTGDTGSEAGGEWVGPSREELFSRTHL) are disordered. A compositionally biased stretch (low complexity) spans 1365-1376 (SSASSDTGDTGS). Basic and acidic residues predominate over residues 1386–1396 (SREELFSRTHL).

This is an uncharacterized protein from Mus musculus (Mouse).